Consider the following 68-residue polypeptide: Neuronal regeneration-related protein (68 aa).

The interval 22 to 54 (EGRLPKGRLPVPKEVNRKKNDETNAASLTPLGS) is disordered. Residues 44 to 54 (TNAASLTPLGS) show a composition bias toward polar residues. S59 is modified (phosphoserine).

Interacts with the latency-associated peptides (LAP) of TGFB1 and TGFB2; the interaction results in a decrease in TGFB autoinduction. Interacts with FLNA. In terms of processing, phosphorylated on Ser-59. Phosphorylation decreases stability and activity. In terms of tissue distribution, expressed in lung (at protein level).

Its subcellular location is the cytoplasm. Functionally, may have roles in neural function. Ectopic expression augments motility of gliomas. Also promotes axonal regeneration. May also have functions in cellular differentiation. Induces differentiation of fibroblast into myofibroblast and myofibroblast ameboid migration. Increases retinoic-acid regulation of lipid-droplet biogenesis. Down-regulates the expression of TGFB1 and TGFB2 but not of TGFB3. May play a role in the regulation of alveolar generation. The polypeptide is Neuronal regeneration-related protein (NREP) (Homo sapiens (Human)).